The following is a 161-amino-acid chain: RNA pyrophosphohydrolase (161 aa).

The Nudix hydrolase domain maps to P12–N154. Positions G46–G67 match the Nudix box motif.

The protein belongs to the Nudix hydrolase family. RppH subfamily. It depends on a divalent metal cation as a cofactor.

In terms of biological role, accelerates the degradation of transcripts by removing pyrophosphate from the 5'-end of triphosphorylated RNA, leading to a more labile monophosphorylated state that can stimulate subsequent ribonuclease cleavage. This Orientia tsutsugamushi (strain Boryong) (Rickettsia tsutsugamushi) protein is RNA pyrophosphohydrolase.